We begin with the raw amino-acid sequence, 264 residues long: MFDIGVNLTSSQFESDRDAVISRARREGVTGMLLTGTGIEESRHALRLAEGAPGYCWSTAGIHPHEASTWTDAAALSIRQLAVHPQVVAIGECGLDFNRNFSTPSEQERAFSAQLAIAADLGMPVFMHCREAHSRFMMLLRPWLEKLPAAVLHCFTGTRDELDECLQAGLSIGITGWVCDERRGLALRALLEYIPDDRLLLETDAPYLLPRDLHPKPTSRRNEPCFLPHIVRQVAAWRKQDAVALGRVVDDNARRIFRLGQKGE.

A divalent metal cation is bound by residues E92, H128, and H153.

It belongs to the metallo-dependent hydrolases superfamily. TatD-type hydrolase family. TatD subfamily. As to quaternary structure, monomer. Requires Mg(2+) as cofactor.

It localises to the cytoplasm. 3'-5' exonuclease that prefers single-stranded DNA and RNA. May play a role in the H(2)O(2)-induced DNA damage repair. The sequence is that of 3'-5' ssDNA/RNA exonuclease TatD from Musicola paradisiaca (strain Ech703) (Dickeya paradisiaca).